The following is a 115-amino-acid chain: Phosphorelay protein LuxU (115 aa).

An HPt domain is found at 17 to 107 (GADNVPVLLE…DRLHQTQQAY (91 aa)). H56 bears the Phosphohistidine mark.

Monomer.

In terms of biological role, phosphorelay protein which receives a sensory signal from a sensor kinase and transmit it to LuxO. At low cell density, a phosphoryl group is transferred from the sensor kinase, probably on His-56 and this phosphoryl group is further transferred to LuxO. In Vibrio vulnificus (strain CMCP6), this protein is Phosphorelay protein LuxU (luxU).